Consider the following 431-residue polypeptide: Glutamate--tRNA ligase 1 (431 aa).

Residues Pro6 to Asn16 carry the 'HIGH' region motif. Positions Lys235–Arg239 match the 'KMSKS' region motif. Position 238 (Lys238) interacts with ATP.

This sequence belongs to the class-I aminoacyl-tRNA synthetase family. Glutamate--tRNA ligase type 1 subfamily. In terms of assembly, monomer.

The protein resides in the cytoplasm. The enzyme catalyses tRNA(Glu) + L-glutamate + ATP = L-glutamyl-tRNA(Glu) + AMP + diphosphate. Functionally, catalyzes the attachment of glutamate to tRNA(Glu) in a two-step reaction: glutamate is first activated by ATP to form Glu-AMP and then transferred to the acceptor end of tRNA(Glu). The sequence is that of Glutamate--tRNA ligase 1 from Campylobacter concisus (strain 13826).